A 145-amino-acid polypeptide reads, in one-letter code: Large-conductance mechanosensitive channel (145 aa).

The next 2 membrane-spanning stretches (helical) occupy residues 14–34 (VIDLAVGIIIGAAFTAIVNSL) and 83–103 (GAFLSAVINFLIIAWAVFLLV).

This sequence belongs to the MscL family. Homopentamer.

Its subcellular location is the cell inner membrane. Its function is as follows. Channel that opens in response to stretch forces in the membrane lipid bilayer. May participate in the regulation of osmotic pressure changes within the cell. In Paracoccus denitrificans (strain Pd 1222), this protein is Large-conductance mechanosensitive channel.